A 156-amino-acid polypeptide reads, in one-letter code: 2-C-methyl-D-erythritol 2,4-cyclodiphosphate synthase (156 aa).

Residues aspartate 9 and histidine 11 each coordinate a divalent metal cation. 4-CDP-2-C-methyl-D-erythritol 2-phosphate is bound by residues 9–11 (DAH) and 35–36 (HS). Histidine 43 is a binding site for a divalent metal cation. A 4-CDP-2-C-methyl-D-erythritol 2-phosphate-binding site is contributed by 57 to 59 (DIG).

This sequence belongs to the IspF family. As to quaternary structure, homotrimer. A divalent metal cation serves as cofactor.

The enzyme catalyses 4-CDP-2-C-methyl-D-erythritol 2-phosphate = 2-C-methyl-D-erythritol 2,4-cyclic diphosphate + CMP. Its pathway is isoprenoid biosynthesis; isopentenyl diphosphate biosynthesis via DXP pathway; isopentenyl diphosphate from 1-deoxy-D-xylulose 5-phosphate: step 4/6. Functionally, involved in the biosynthesis of isopentenyl diphosphate (IPP) and dimethylallyl diphosphate (DMAPP), two major building blocks of isoprenoid compounds. Catalyzes the conversion of 4-diphosphocytidyl-2-C-methyl-D-erythritol 2-phosphate (CDP-ME2P) to 2-C-methyl-D-erythritol 2,4-cyclodiphosphate (ME-CPP) with a corresponding release of cytidine 5-monophosphate (CMP). The sequence is that of 2-C-methyl-D-erythritol 2,4-cyclodiphosphate synthase from Hydrogenobaculum sp. (strain Y04AAS1).